Reading from the N-terminus, the 652-residue chain is Large subunit GTPase 1 homolog (652 aa).

Position 93 is a phosphoserine (S93). The region spanning 164–438 (WRQLWRVIER…LCDCPGLVMP (275 aa)) is the CP-type G domain. GTP is bound at residue 212-215 (NKAD). At S252 the chain carries Phosphoserine. The interval 288–347 (LGEAASSEEDESEYEDCQEEEEDWQTCLEDSSSSDEEACGQDCKEGHTVDSEAQGRNTPQ) is disordered. Over residues 293 to 311 (SSEEDESEYEDCQEEEEDW) the composition is skewed to acidic residues. GTP-binding positions include 387 to 394 (GYPNVGKS) and 431 to 434 (DCPG). The disordered stretch occupies residues 625 to 652 (RGAGKPWKKHGNRNKKEKSRRLYKHLDM). Over residues 630-652 (PWKKHGNRNKKEKSRRLYKHLDM) the composition is skewed to basic residues.

This sequence belongs to the TRAFAC class YlqF/YawG GTPase family. LSG1 subfamily.

Its subcellular location is the cytoplasm. It is found in the endoplasmic reticulum. It localises to the nucleus. The protein localises to the cajal body. It carries out the reaction GTP + H2O = GDP + phosphate + H(+). In terms of biological role, functions as a GTPase. May act by mediating the release of NMD3 from the 60S ribosomal subunit after export into the cytoplasm during the 60S ribosomal subunit maturation. This Bos taurus (Bovine) protein is Large subunit GTPase 1 homolog.